A 231-amino-acid chain; its full sequence is Probable glutathione S-transferase GSTU1 (231 aa).

The region spanning 5 to 84 is the GST N-terminal domain; it reads KELVLLDFWV…YLDDAFPGTP (80 aa). Glutathione-binding positions include serine 15, lysine 42, isoleucine 56, and 68 to 69; that span reads ES. In terms of domain architecture, GST C-terminal spans 97–220; the sequence is AAYARATARF…LPSPEKVYDF (124 aa).

The protein belongs to the GST superfamily. Tau family.

The enzyme catalyses RX + glutathione = an S-substituted glutathione + a halide anion + H(+). Functionally, conjugation of reduced glutathione to a wide number of exogenous and endogenous hydrophobic electrophiles. In Oryza sativa subsp. indica (Rice), this protein is Probable glutathione S-transferase GSTU1 (GSTU1).